Consider the following 63-residue polypeptide: uncharacterized protein (63 aa).

This is an uncharacterized protein from Bacillus subtilis (strain 168).